Here is a 139-residue protein sequence, read N- to C-terminus: MLSPRRTKFRKQQRGRMRGMAYRGSTINFGDYALQATEPCWITSRQIEAARRAMTRYIKRGGKIWIRIFPDKPVTMRPAETRMGSGKGSPEYWVAVVKPGRIMFELDGVSEPIAREAMRLAAQKLPIKTKFITKAEEYI.

It belongs to the universal ribosomal protein uL16 family. Part of the 50S ribosomal subunit.

In terms of biological role, binds 23S rRNA and is also seen to make contacts with the A and possibly P site tRNAs. The sequence is that of Large ribosomal subunit protein uL16 from Rippkaea orientalis (strain PCC 8801 / RF-1) (Cyanothece sp. (strain PCC 8801)).